Consider the following 452-residue polypeptide: Exodeoxyribonuclease 7 large subunit (452 aa).

This sequence belongs to the XseA family. As to quaternary structure, heterooligomer composed of large and small subunits.

The protein resides in the cytoplasm. The catalysed reaction is Exonucleolytic cleavage in either 5'- to 3'- or 3'- to 5'-direction to yield nucleoside 5'-phosphates.. Bidirectionally degrades single-stranded DNA into large acid-insoluble oligonucleotides, which are then degraded further into small acid-soluble oligonucleotides. This is Exodeoxyribonuclease 7 large subunit from Bacillus thuringiensis (strain Al Hakam).